Consider the following 238-residue polypeptide: Ribonuclease PH (238 aa).

Residues arginine 86 and 124–126 (GTR) each bind phosphate.

This sequence belongs to the RNase PH family. In terms of assembly, homohexameric ring arranged as a trimer of dimers.

It catalyses the reaction tRNA(n+1) + phosphate = tRNA(n) + a ribonucleoside 5'-diphosphate. Phosphorolytic 3'-5' exoribonuclease that plays an important role in tRNA 3'-end maturation. Removes nucleotide residues following the 3'-CCA terminus of tRNAs; can also add nucleotides to the ends of RNA molecules by using nucleoside diphosphates as substrates, but this may not be physiologically important. Probably plays a role in initiation of 16S rRNA degradation (leading to ribosome degradation) during starvation. The protein is Ribonuclease PH of Actinobacillus pleuropneumoniae serotype 7 (strain AP76).